Here is a 355-residue protein sequence, read N- to C-terminus: Peptide chain release factor 1 (355 aa).

Q233 bears the N5-methylglutamine mark.

It belongs to the prokaryotic/mitochondrial release factor family. Methylated by PrmC. Methylation increases the termination efficiency of RF1.

It localises to the cytoplasm. Peptide chain release factor 1 directs the termination of translation in response to the peptide chain termination codons UAG and UAA. The chain is Peptide chain release factor 1 from Desulfitobacterium hafniense (strain DSM 10664 / DCB-2).